Reading from the N-terminus, the 468-residue chain is 3-isopropylmalate dehydratase large subunit (468 aa).

3 residues coordinate [4Fe-4S] cluster: Cys-347, Cys-407, and Cys-410.

Belongs to the aconitase/IPM isomerase family. LeuC type 1 subfamily. In terms of assembly, heterodimer of LeuC and LeuD. It depends on [4Fe-4S] cluster as a cofactor.

The enzyme catalyses (2R,3S)-3-isopropylmalate = (2S)-2-isopropylmalate. It functions in the pathway amino-acid biosynthesis; L-leucine biosynthesis; L-leucine from 3-methyl-2-oxobutanoate: step 2/4. Its function is as follows. Catalyzes the isomerization between 2-isopropylmalate and 3-isopropylmalate, via the formation of 2-isopropylmaleate. This chain is 3-isopropylmalate dehydratase large subunit, found in Prochlorococcus marinus (strain AS9601).